A 721-amino-acid polypeptide reads, in one-letter code: Homeobox-leucine zipper protein HDG2 (721 aa).

The segment at Asn17 to Arg70 is disordered. The span at Tyr21 to Asp34 shows a compositional bias: basic and acidic residues. A DNA-binding region (homeobox) is located at residues Lys64 to His123. Residues Lys120–Tyr194 adopt a coiled-coil conformation. The START domain occupies Thr242–Ser468.

Belongs to the HD-ZIP homeobox family. Class IV subfamily. As to quaternary structure, interacts with AIL7/PLT7, ANT, BBM and AIL1. In terms of tissue distribution, expressed in hairless cell files of the hypocotyl epidermis. Expressed in shoot apical meristem (SAM) with higher levels in L1 cells and the epidermal layer of young leaves. Expressed in primary root tips, in the L1 of apical inflorescence meristems, early flower primordia, carpel epidermis, ovule primordia, nucellus, chalaze and seed coat.

It localises to the nucleus. Its function is as follows. Probable transcription factor. Involved, together with PDF2, in the regulation of flower organs development by promoting the expression of APETALA 3 (AP3) in the epidermis and internal cell layers of developing flowers. The sequence is that of Homeobox-leucine zipper protein HDG2 from Arabidopsis thaliana (Mouse-ear cress).